Consider the following 206-residue polypeptide: FMN-dependent NADH:quinone oxidoreductase (206 aa).

FMN-binding positions include serine 10 and 15–17; that span reads SVS.

Belongs to the azoreductase type 1 family. As to quaternary structure, homodimer. It depends on FMN as a cofactor.

It catalyses the reaction 2 a quinone + NADH + H(+) = 2 a 1,4-benzosemiquinone + NAD(+). The catalysed reaction is N,N-dimethyl-1,4-phenylenediamine + anthranilate + 2 NAD(+) = 2-(4-dimethylaminophenyl)diazenylbenzoate + 2 NADH + 2 H(+). Quinone reductase that provides resistance to thiol-specific stress caused by electrophilic quinones. Its function is as follows. Also exhibits azoreductase activity. Catalyzes the reductive cleavage of the azo bond in aromatic azo compounds to the corresponding amines. The protein is FMN-dependent NADH:quinone oxidoreductase of Acidobacterium capsulatum (strain ATCC 51196 / DSM 11244 / BCRC 80197 / JCM 7670 / NBRC 15755 / NCIMB 13165 / 161).